Consider the following 46-residue polypeptide: Daisho2 (46 aa).

Residues 1 to 22 (MNCLKICGFFFALIAALATAEA) form the signal peptide.

As to expression, hemolymph (at protein level).

It is found in the secreted. Peptide which plays a role in the humoral immune response to a subset of filamentous fungi, including F.oxysporum and F.verticillioides. The polypeptide is Daisho2 (Drosophila melanogaster (Fruit fly)).